A 391-amino-acid polypeptide reads, in one-letter code: Lipid-A-disaccharide synthase (391 aa).

The protein belongs to the LpxB family.

The catalysed reaction is a lipid X + a UDP-2-N,3-O-bis[(3R)-3-hydroxyacyl]-alpha-D-glucosamine = a lipid A disaccharide + UDP + H(+). It functions in the pathway bacterial outer membrane biogenesis; LPS lipid A biosynthesis. Condensation of UDP-2,3-diacylglucosamine and 2,3-diacylglucosamine-1-phosphate to form lipid A disaccharide, a precursor of lipid A, a phosphorylated glycolipid that anchors the lipopolysaccharide to the outer membrane of the cell. The polypeptide is Lipid-A-disaccharide synthase (Azoarcus sp. (strain BH72)).